The primary structure comprises 507 residues: ATP synthase subunit alpha (507 aa).

Residue 170–177 participates in ATP binding; the sequence is GDRQTGKT.

This sequence belongs to the ATPase alpha/beta chains family. F-type ATPases have 2 components, CF(1) - the catalytic core - and CF(0) - the membrane proton channel. CF(1) has five subunits: alpha(3), beta(3), gamma(1), delta(1), epsilon(1). CF(0) has three main subunits: a(1), b(2) and c(9-12). The alpha and beta chains form an alternating ring which encloses part of the gamma chain. CF(1) is attached to CF(0) by a central stalk formed by the gamma and epsilon chains, while a peripheral stalk is formed by the delta and b chains.

It is found in the cell inner membrane. The catalysed reaction is ATP + H2O + 4 H(+)(in) = ADP + phosphate + 5 H(+)(out). In terms of biological role, produces ATP from ADP in the presence of a proton gradient across the membrane. The alpha chain is a regulatory subunit. This is ATP synthase subunit alpha from Thermosipho melanesiensis (strain DSM 12029 / CIP 104789 / BI429).